Consider the following 459-residue polypeptide: Glutamate--tRNA ligase 2 (459 aa).

The 'HIGH' region motif lies at 8–18 (PSPTGYLHIGG). A 'KMSKS' region motif is present at residues 237–241 (KLSKR). ATP is bound at residue lysine 240.

The protein belongs to the class-I aminoacyl-tRNA synthetase family. Glutamate--tRNA ligase type 1 subfamily. Monomer.

The protein localises to the cytoplasm. The enzyme catalyses tRNA(Glu) + L-glutamate + ATP = L-glutamyl-tRNA(Glu) + AMP + diphosphate. In terms of biological role, catalyzes the attachment of glutamate to tRNA(Glu) in a two-step reaction: glutamate is first activated by ATP to form Glu-AMP and then transferred to the acceptor end of tRNA(Glu). In Campylobacter concisus (strain 13826), this protein is Glutamate--tRNA ligase 2.